The following is a 102-amino-acid chain: Large ribosomal subunit protein bL21 (102 aa).

It belongs to the bacterial ribosomal protein bL21 family. Part of the 50S ribosomal subunit. Contacts protein L20.

Its function is as follows. This protein binds to 23S rRNA in the presence of protein L20. The sequence is that of Large ribosomal subunit protein bL21 from Oceanobacillus iheyensis (strain DSM 14371 / CIP 107618 / JCM 11309 / KCTC 3954 / HTE831).